The chain runs to 261 residues: ClpXP adapter protein SpxH (261 aa).

The protein belongs to the SpxH family. In terms of assembly, interacts with Spx.

Its subcellular location is the cytoplasm. In terms of biological role, adapter protein required for efficient degradation of Spx by ClpXP under non-stress conditions. Interaction with Spx stabilizes Spx and exposes the C-terminus of Spx for recognition and proteolysis by ClpXP. The polypeptide is ClpXP adapter protein SpxH (Staphylococcus aureus).